The following is a 589-amino-acid chain: Muscarinic acetylcholine receptor M3 (589 aa).

Topologically, residues 1 to 66 (MTLHSNSTTS…DPLGGHTIWQ (66 aa)) are extracellular. 5 N-linked (GlcNAc...) asparagine glycosylation sites follow: N6, N15, N41, N48, and N52. A helical membrane pass occupies residues 67 to 90 (VVFIAFLTGFLALVTIIGNILVIV). At 91 to 103 (AFKVNKQLKTVNN) the chain is on the cytoplasmic side. A helical membrane pass occupies residues 104 to 129 (YFLLSLACADLIIGVISMNLFTTYII). Residues 130 to 141 (MNRWALGNLACD) lie on the Extracellular side of the membrane. C140 and C220 are disulfide-bonded. A helical transmembrane segment spans residues 142-163 (LWLSIDYVASNASVMNLLVISF). The Cytoplasmic segment spans residues 164–183 (DRYFSITRPLTYRAKRTTKR). A helical membrane pass occupies residues 184 to 205 (AGVMIGLAWVISFVLWAPAILF). Residues 206-228 (WQYFVGKRTVPPGECFIQFLSEP) are Extracellular-facing. The helical transmembrane segment at 229 to 251 (TITFGTAIAAFYMPVTIMTILYW) threads the bilayer. At 252–490 (RIYKETEKRT…SLIKEKKAAQ (239 aa)) the chain is on the cytoplasmic side. Residues 274–280 (AEAENFV) carry the Basolateral sorting signal motif. Disordered stretches follow at residues 275-295 (EAENFVHPTGSSRSCSSYELQ) and 323-356 (AEQMDQDHSSSDSWNNNDAAASLENSASSDEEDI). The segment covering 283-295 (TGSSRSCSSYELQ) has biased composition (polar residues). The segment covering 333 to 344 (SDSWNNNDAAAS) has biased composition (low complexity). Residue S384 is modified to Phosphoserine. The chain crosses the membrane as a helical span at residues 491-513 (TLSAILLAFIITWTPYNIMVLVN). Residues 514-525 (TFCDSCIPKTYW) are Extracellular-facing. C516 and C519 are joined by a disulfide. Residues 526–545 (NLGYWLCYINSTVNPVCYAL) traverse the membrane as a helical segment. Residues 546 to 589 (CNKTFRTTFKMLLLCQCDKRKRRKQQYQQRQSVIFHKRVPEQAL) lie on the Cytoplasmic side of the membrane.

It belongs to the G-protein coupled receptor 1 family. Muscarinic acetylcholine receptor subfamily. CHRM3 sub-subfamily. As to quaternary structure, homodimer; the dimers can form tetramers. Interacts with NALCN. Interacts with TMEM147. Expressed in cerebral cortex, submandibular gland, hypothalamus, pancreas, liver, and ileum.

It localises to the cell membrane. It is found in the postsynaptic cell membrane. The protein resides in the basolateral cell membrane. The protein localises to the endoplasmic reticulum membrane. Functionally, the muscarinic acetylcholine receptor mediates various cellular responses, including inhibition of adenylate cyclase, breakdown of phosphoinositides and modulation of potassium channels through the action of G proteins. Primary transducing effect is Pi turnover. The sequence is that of Muscarinic acetylcholine receptor M3 (Chrm3) from Mus musculus (Mouse).